We begin with the raw amino-acid sequence, 95 residues long: Probable FAD-linked sulfhydryl oxidase OPG072 (95 aa).

Topologically, residues 1-8 are intravirion; that stretch reads MNPKHWGR. Residues 1-95 form the ERV/ALR sulfhydryl oxidase domain; the sequence is MNPKHWGRAA…AIDVSKVKPL (95 aa). A helical membrane pass occupies residues 9–25; that stretch reads AAWTIIFIVLSQAGLDG. Topologically, residues 26-95 are virion surface; sequence NIEACKRKLY…AIDVSKVKPL (70 aa). An intrachain disulfide couples Cys43 to Cys46.

The protein belongs to the orthopoxvirus OPG072 family. In terms of assembly, interacts with OPG128; this interaction involves formation of a transient disulfide-bonded intermediate, allowing disulfide bond transfer. The cofactor is FAD.

The protein resides in the virion membrane. The protein localises to the host cytoplasm. It carries out the reaction 2 R'C(R)SH + O2 = R'C(R)S-S(R)CR' + H2O2. Functionally, FAD-dependent sulfhydryl oxidase that catalyzes disulfide bond formation. The complete pathway for formation of disulfide bonds in intracellular virion membrane proteins sequentially involves thiol-disulfide transfer between OPG072, OPG128 and OPG088. The polypeptide is Probable FAD-linked sulfhydryl oxidase OPG072 (OPG072) (Variola virus (isolate Human/India/Ind3/1967) (VARV)).